A 483-amino-acid polypeptide reads, in one-letter code: HSPB1-associated protein 1 (483 aa).

Residues 1 to 26 form a disordered region; sequence MAAGCEGIAPPTLGERTVGEEGEPVK. The interaction with HSPB1 stretch occupies residues 88 to 208; sequence ETECSYVDAT…EDTPFLYPTR (121 aa). Positions 124–288 constitute a JmjC domain; that stretch reads WAYADYKYFV…HLARVEEAIT (165 aa). The interval 388–416 is disordered; the sequence is LIPVTPASEERGGALEGDSEESVSSNGGH.

As to quaternary structure, interacts with CRYAB and HSPB1.

The protein localises to the cytoplasm. In terms of biological role, may play a role in cellular stress response. In Mus musculus (Mouse), this protein is HSPB1-associated protein 1 (Hspbap1).